The sequence spans 288 residues: Small ribosomal subunit protein uS2 (288 aa).

The segment at 255–288 (ANNRDHKNNKNNSTIDNAENLKEENLVGGSNNES) is disordered.

The protein belongs to the universal ribosomal protein uS2 family.

This Ehrlichia chaffeensis (strain ATCC CRL-10679 / Arkansas) protein is Small ribosomal subunit protein uS2.